We begin with the raw amino-acid sequence, 93 residues long: UPF0358 protein BLi01701/BL02974 (93 aa).

It belongs to the UPF0358 family.

This Bacillus licheniformis (strain ATCC 14580 / DSM 13 / JCM 2505 / CCUG 7422 / NBRC 12200 / NCIMB 9375 / NCTC 10341 / NRRL NRS-1264 / Gibson 46) protein is UPF0358 protein BLi01701/BL02974.